Here is an 80-residue protein sequence, read N- to C-terminus: Metallothionein-like protein type 2, MT2-4/MT2-25 (80 aa).

It belongs to the metallothionein superfamily. Type 15 family.

Functionally, metallothioneins have a high content of cysteine residues that bind various heavy metals. This chain is Metallothionein-like protein type 2, MT2-4/MT2-25, found in Brassica juncea (Indian mustard).